A 271-amino-acid chain; its full sequence is Chymotrypsin-like elastase family member 2A (271 aa).

The first 16 residues, 1–16 (MIRTLLLSALVAGALS), serve as a signal peptide directing secretion. The propeptide at 17-30 (CGYPTYEVEDDVSR) is activation peptide. Residues 31–269 (VVGGQEATPN…YIDWINSVMA (239 aa)) form the Peptidase S1 domain. A disulfide bridge connects residues cysteine 60 and cysteine 76. Catalysis depends on charge relay system residues histidine 75 and aspartate 123. 3 disulfide bridges follow: cysteine 157-cysteine 224, cysteine 188-cysteine 204, and cysteine 214-cysteine 245. Serine 218 (charge relay system) is an active-site residue.

It belongs to the peptidase S1 family. Elastase subfamily. In terms of assembly, interacts with CPA1. Interacts with SERPINA1. As to expression, highly expressed in pancreas (at mRNA and protein levels). Also expressed in adrenal gland and small intestine.

It localises to the secreted. It catalyses the reaction Preferential cleavage: Leu-|-Xaa, Met-|-Xaa and Phe-|-Xaa. Hydrolyzes elastin.. In terms of biological role, elastase that enhances insulin signaling and might have a physiologic role in cellular glucose metabolism. Circulates in plasma and reduces platelet hyperactivation, triggers both insulin secretion and degradation, and increases insulin sensitivity. The polypeptide is Chymotrypsin-like elastase family member 2A (Mus musculus (Mouse)).